We begin with the raw amino-acid sequence, 229 residues long: Extracellular small neutral protease (229 aa).

The first 28 residues, 1-28 (MRMPLSVLTAAGLSLATLGLGTAGPASA), serve as a signal peptide directing secretion. A propeptide spanning residues 29 to 81 (TPTAEGAPVVAYDGSPSAGSPADAKAEAAANRAFFEAVLRSVAEKRAANPKST) is cleaved from the precursor. Asp159 and Thr161 together coordinate Ca(2+). Position 166 (His166) interacts with Zn(2+). Glu167 is a catalytic residue. Zn(2+) is bound by residues His170 and Asp176. An intrachain disulfide couples Cys182 to Cys195.

It belongs to the peptidase M7 family. As to quaternary structure, monomer. Ca(2+) serves as cofactor. It depends on Zn(2+) as a cofactor.

Its subcellular location is the secreted. It carries out the reaction Hydrolyzes proteins with a preference for Tyr or Phe in the P1' position. Has no action on amino-acid p-nitroanilides.. Milk hydrolyzing. In Streptomyces sp. (strain C5), this protein is Extracellular small neutral protease (snpA).